We begin with the raw amino-acid sequence, 377 residues long: Citrate synthase (377 aa).

Residues H258 and D313 contribute to the active site.

This sequence belongs to the citrate synthase family. In terms of assembly, homodimer. In terms of processing, the N-terminus is blocked by acetylation.

It catalyses the reaction oxaloacetate + acetyl-CoA + H2O = citrate + CoA + H(+). Its pathway is carbohydrate metabolism; tricarboxylic acid cycle; isocitrate from oxaloacetate: step 1/2. Its activity is regulated as follows. Allosterically inhibited by NADH. This chain is Citrate synthase (gltA), found in Saccharolobus solfataricus (strain ATCC 35092 / DSM 1617 / JCM 11322 / P2) (Sulfolobus solfataricus).